The following is an 883-amino-acid chain: Translation initiation factor IF-2 (883 aa).

Disordered regions lie at residues 52–102 and 115–297; these read KGRD…VNVE and VEAE…PTQP. Basic and acidic residues-rich tracts occupy residues 115-179 and 204-237; these read VEAE…REAT and AAEK…ERAA. A compositionally biased stretch (low complexity) spans 239-248; it reads KTGATAPAAK. The span at 265–275 shows a compositional bias: basic residues; it reads PGRRGGKKGGR. A compositionally biased stretch (low complexity) spans 276 to 285; it reads RAASGGEAAK. Residues 383 to 550 enclose the tr-type G domain; the sequence is PRPPVVTVMG…AILLQAELME (168 aa). Positions 392–399 are G1; the sequence is GHVDHGKT. Residue 392–399 participates in GTP binding; that stretch reads GHVDHGKT. The tract at residues 417 to 421 is G2; that stretch reads GITQH. The G3 stretch occupies residues 438 to 441; sequence DTPG. Residues 438–442 and 492–495 contribute to the GTP site; these read DTPGH and NKID. Positions 492–495 are G4; it reads NKID. The segment at 528–530 is G5; it reads SAK.

Belongs to the TRAFAC class translation factor GTPase superfamily. Classic translation factor GTPase family. IF-2 subfamily.

It localises to the cytoplasm. In terms of biological role, one of the essential components for the initiation of protein synthesis. Protects formylmethionyl-tRNA from spontaneous hydrolysis and promotes its binding to the 30S ribosomal subunits. Also involved in the hydrolysis of GTP during the formation of the 70S ribosomal complex. The sequence is that of Translation initiation factor IF-2 from Alkalilimnicola ehrlichii (strain ATCC BAA-1101 / DSM 17681 / MLHE-1).